We begin with the raw amino-acid sequence, 491 residues long: MNTQQLAKLRSIVPEMRRVRHIHFVGIGGAGMGGIAEVLANEGYQISGSDLAPNPVTQQLMNLGATIYFNHRPENVRDASVVVVSSAISADNPEIVAAHEARIPVIRRAEMLAELMRFRHGIAIAGTHGKTTTTAMVSSIYAEAGLDPTFVNGGLVKAAGVHARLGHGRYLIAEADESDASFLHLQPMVAIVTNIEADHMDTYQGDFENLKQTFINFLHNLPFYGRAVMCVDDPVIRELLPRVGRQTTTYGFSEDADVRVEDYQQIGPQGHFTLLRQDKEPMRVTLNAPGRHNALNAAAAVAVATEEGIDDEAILRALESFLGTGRRFDFLGEFPLEPVNGKSGTAMLVDDYGHHPTEVDATIKAARAGWPDKNLVMLFQPHRFTRTRDLYDDFANVLTQVDTLLMLEVYPAGEAPIPGADSRSLCRTIRGRGKIDPILVPDPAQVAEMLAPVLTGNDLILVQGAGNIGKIARSLAEIKLKPQTPEEEQHD.

Residue 126-132 (GTHGKTT) participates in ATP binding.

This sequence belongs to the MurCDEF family.

The protein resides in the cytoplasm. It catalyses the reaction UDP-N-acetyl-alpha-D-muramate + L-alanine + ATP = UDP-N-acetyl-alpha-D-muramoyl-L-alanine + ADP + phosphate + H(+). It participates in cell wall biogenesis; peptidoglycan biosynthesis. Functionally, cell wall formation. This Shigella boydii serotype 18 (strain CDC 3083-94 / BS512) protein is UDP-N-acetylmuramate--L-alanine ligase.